The following is a 252-amino-acid chain: 5-oxoprolinase subunit A (252 aa).

Belongs to the LamB/PxpA family. As to quaternary structure, forms a complex composed of PxpA, PxpB and PxpC.

It catalyses the reaction 5-oxo-L-proline + ATP + 2 H2O = L-glutamate + ADP + phosphate + H(+). Catalyzes the cleavage of 5-oxoproline to form L-glutamate coupled to the hydrolysis of ATP to ADP and inorganic phosphate. This chain is 5-oxoprolinase subunit A, found in Mycobacterium leprae (strain Br4923).